The following is a 154-amino-acid chain: Ascorbate-specific PTS system EIIA component (154 aa).

Residues 6-150 (SLAENKSIRL…QEVLDLIDRT (145 aa)) enclose the PTS EIIA type-2 domain. His68 (tele-phosphohistidine intermediate) is an active-site residue. The residue at position 68 (His68) is a Phosphohistidine.

It is found in the cytoplasm. In terms of biological role, the phosphoenolpyruvate-dependent sugar phosphotransferase system (sugar PTS), a major carbohydrate active transport system, catalyzes the phosphorylation of incoming sugar substrates concomitantly with their translocation across the cell membrane. The enzyme II UlaABC PTS system is involved in ascorbate transport. The polypeptide is Ascorbate-specific PTS system EIIA component (ulaC) (Shigella flexneri).